The sequence spans 426 residues: PI-PLC X domain-containing protein At5g67130 (426 aa).

The signal sequence occupies residues 1 to 28; that stretch reads MSACINGLCRAVTVSLLLLLLSFSFSSA. Residues 76 to 232 form the PI-PLC X-box domain; it reads IINGLPFNKY…MVQENHRLLV (157 aa). N-linked (GlcNAc...) asparagine glycans are attached at residues asparagine 151 and asparagine 255. Residues 258-277 are disordered; that stretch reads GDPGVKRGSCPNRKESQPLN. N-linked (GlcNAc...) asparagine glycosylation is present at asparagine 370. A lipid anchor (GPI-anchor amidated serine) is attached at serine 404. Positions 405-426 are cleaved as a propeptide — removed in mature form; that stretch reads VAQLNNIVVFCFSLLPLLIFLL.

Its subcellular location is the cell membrane. The polypeptide is PI-PLC X domain-containing protein At5g67130 (Arabidopsis thaliana (Mouse-ear cress)).